Reading from the N-terminus, the 647-residue chain is Protein arginine N-methyltransferase 7 (647 aa).

2 consecutive SAM-dependent MTase PRMT-type domains span residues 12–332 (EREW…FSLW) and 337–647 (GKDK…SEDS). Active-site residues include glutamate 140 and glutamate 149.

Belongs to the class I-like SAM-binding methyltransferase superfamily. Protein arginine N-methyltransferase family. PRMT7 subfamily.

Functionally, arginine methyltransferase that can both catalyze the formation of omega-N monomethylarginine (MMA) and symmetrical dimethylarginine (sDMA). This is Protein arginine N-methyltransferase 7 (prmt-7) from Caenorhabditis elegans.